The chain runs to 386 residues: Succinate--CoA ligase [ADP-forming] subunit beta (386 aa).

The ATP-grasp domain maps to 9 to 244; it reads KEILRKYGVP…HDEEDPLETR (236 aa). ATP-binding positions include Lys46, 53 to 55, Glu99, Cys102, and Glu107; that span reads GRG. Positions 199 and 213 each coordinate Mg(2+). Substrate contacts are provided by residues Asn264 and 321-323; that span reads GIM.

It belongs to the succinate/malate CoA ligase beta subunit family. In terms of assembly, heterotetramer of two alpha and two beta subunits. Requires Mg(2+) as cofactor.

The catalysed reaction is succinate + ATP + CoA = succinyl-CoA + ADP + phosphate. It catalyses the reaction GTP + succinate + CoA = succinyl-CoA + GDP + phosphate. Its pathway is carbohydrate metabolism; tricarboxylic acid cycle; succinate from succinyl-CoA (ligase route): step 1/1. Its function is as follows. Succinyl-CoA synthetase functions in the citric acid cycle (TCA), coupling the hydrolysis of succinyl-CoA to the synthesis of either ATP or GTP and thus represents the only step of substrate-level phosphorylation in the TCA. The beta subunit provides nucleotide specificity of the enzyme and binds the substrate succinate, while the binding sites for coenzyme A and phosphate are found in the alpha subunit. The chain is Succinate--CoA ligase [ADP-forming] subunit beta from Rickettsia felis (strain ATCC VR-1525 / URRWXCal2) (Rickettsia azadi).